The chain runs to 451 residues: Tubulin gamma-2 chain (451 aa).

Ser131 is modified (phosphoserine; by BRSK1). 142-148 contacts GTP; the sequence is AGGTGSG.

It belongs to the tubulin family. As to quaternary structure, component of the gamma-tubulin ring complex (gTuRC) consisting of TUBGCP2, TUBGCP3, TUBGCP4, TUBGCP5 and TUBGCP6 and gamma-tubulin TUBG1 or TUBG2. TUBGCP2, TUBGCP3, TUBGCP4, TUBGCP5 and TUBGCP6 assemble in a 5:5:2:1:1 stoichiometry; each is associated with a gamma-tubulin, thereby arranging 14 gamma-tubulins in a helical manner. Gamma-tubulin at the first position is blocked by TUBGCP3 at the last position, allowing 13 protafilaments to grow into a microtubule. Interacts with alpha-beta tubulin heterodimers; the interaction allows microtubules to nucleate from the gTuRC. Phosphorylation at Ser-131 by BRSK1 regulates centrosome duplication, possibly by mediating relocation of gamma-tubulin and its associated proteins from the cytoplasm to the centrosome.

The protein resides in the cytoplasm. It localises to the cytoskeleton. The protein localises to the microtubule organizing center. It is found in the centrosome. Functionally, tubulin is the major constituent of microtubules, protein filaments consisting of alpha- and beta-tubulin heterodimers. Gamma-tubulin is a key component of the gamma-tubulin ring complex (gTuRC) which mediates microtubule nucleation. The gTuRC regulates the minus-end nucleation of alpha-beta tubulin heterodimers that grow into microtubule protafilaments, a critical step in centrosome duplication and spindle formation. The protein is Tubulin gamma-2 chain (TUBG2) of Bos taurus (Bovine).